A 182-amino-acid chain; its full sequence is Caltractin ICL1b (182 aa).

The tract at residues 1-31 (MSRRGQQPPPQQQQAPPQKNQAGKFNPAEFV) is disordered. 4 EF-hand domains span residues 38–73 (EEVLEIKEAFDLFDTDGTQSIDPKELKAAMTSLGFE), 74–109 (AKNQTIYQMISDLDTDGSGQIDFAEFLKLMTARISE), 111–146 (DSKADIQKVFNLFDSERAGVITLKDLRKVAKELGET), and 147–182 (MDDSELQEMIDRADSDGDAQVTFEDFYNIMTKKTFA). Ca(2+) contacts are provided by D51, D53, T55, S57, E62, D87, D89, S91, Q93, and E98.

The protein belongs to the centrin family.

It localises to the cytoplasm. The protein localises to the cytoskeleton. Functionally, plays a fundamental role in microtubule organizing center structure and function. Component of the infraciliary lattice (ICL) and the ciliary basal bodies. The chain is Caltractin ICL1b (Icl1b) from Paramecium tetraurelia.